A 215-amino-acid chain; its full sequence is MTAVNIWKPEDNIPREILAILSKPHPNYQLAFLNIIQLLKTQRRTGWVDHGIDPCESISDHMYRMGLTTMLITDKNVDRNKCIRIALVHDFAESLVGDITPNDPMTKEEKHRREFETVKYLCESIIRPCSESASREILDDWLAYEKQTCLEGRYVKDIDKYEMLVQCFEYEQKYNGKKDLKQFLGAINDIKTDEVKKWTQSLLEDRQAFFDSLKE.

The HD domain maps to 58–164; that stretch reads ISDHMYRMGL…VKDIDKYEML (107 aa). The a divalent metal cation site is built by histidine 61, histidine 89, aspartate 90, glutamate 93, aspartate 98, isoleucine 99, and aspartate 159.

This sequence belongs to the HDDC2 family. Homodimer. Mn(2+) is required as a cofactor. Co(2+) serves as cofactor. It depends on Mg(2+) as a cofactor.

The enzyme catalyses a 2'-deoxyribonucleoside 5'-phosphate + H2O = a 2'-deoxyribonucleoside + phosphate. In terms of biological role, catalyzes the dephosphorylation of the nucleoside 5'-monophosphates deoxyadenosine monophosphate (dAMP), deoxycytidine monophosphate (dCMP), deoxyguanosine monophosphate (dGMP) and deoxythymidine monophosphate (dTMP). This Saccharomyces cerevisiae (strain ATCC 204508 / S288c) (Baker's yeast) protein is 5'-deoxynucleotidase YGK1.